Here is a 294-residue protein sequence, read N- to C-terminus: ATP synthase gamma chain (294 aa).

It belongs to the ATPase gamma chain family. F-type ATPases have 2 components, CF(1) - the catalytic core - and CF(0) - the membrane proton channel. CF(1) has five subunits: alpha(3), beta(3), gamma(1), delta(1), epsilon(1). CF(0) has three main subunits: a, b and c.

Its subcellular location is the cell inner membrane. Produces ATP from ADP in the presence of a proton gradient across the membrane. The gamma chain is believed to be important in regulating ATPase activity and the flow of protons through the CF(0) complex. This is ATP synthase gamma chain from Parvibaculum lavamentivorans (strain DS-1 / DSM 13023 / NCIMB 13966).